Here is a 253-residue protein sequence, read N- to C-terminus: NADH-quinone oxidoreductase subunit C (253 aa).

2 disordered regions span residues 1–33 (MSPD…DTEP) and 234–253 (IPVE…RAYS).

Belongs to the complex I 30 kDa subunit family. As to quaternary structure, NDH-1 is composed of 14 different subunits. Subunits NuoB, C, D, E, F, and G constitute the peripheral sector of the complex.

It localises to the cell membrane. The catalysed reaction is a quinone + NADH + 5 H(+)(in) = a quinol + NAD(+) + 4 H(+)(out). In terms of biological role, NDH-1 shuttles electrons from NADH, via FMN and iron-sulfur (Fe-S) centers, to quinones in the respiratory chain. The immediate electron acceptor for the enzyme in this species is believed to be a menaquinone. Couples the redox reaction to proton translocation (for every two electrons transferred, four hydrogen ions are translocated across the cytoplasmic membrane), and thus conserves the redox energy in a proton gradient. The sequence is that of NADH-quinone oxidoreductase subunit C from Nocardia farcinica (strain IFM 10152).